The sequence spans 437 residues: Protein arginine methyltransferase NDUFAF7, mitochondrial (437 aa).

Residues 1–42 (MSGLARLQRLQKFGFLMVSASANRPIQRYQCSRTEKPQKRTS) constitute a mitochondrion transit peptide.

The protein belongs to the NDUFAF7 family.

The protein resides in the mitochondrion. The enzyme catalyses L-arginyl-[protein] + 2 S-adenosyl-L-methionine = N(omega),N(omega)'-dimethyl-L-arginyl-[protein] + 2 S-adenosyl-L-homocysteine + 2 H(+). In terms of biological role, arginine methyltransferase involved in the assembly or stability of mitochondrial NADH:ubiquinone oxidoreductase complex (complex I). Acts by mediating symmetric dimethylation of 'Arg-118' of ndufs2 after it assembles into the complex I, stabilizing the early intermediate complex. In Xenopus laevis (African clawed frog), this protein is Protein arginine methyltransferase NDUFAF7, mitochondrial.